The sequence spans 468 residues: UDP-N-acetylmuramate--L-alanine ligase (468 aa).

Residue 116 to 122 (GTHGKTT) participates in ATP binding.

It belongs to the MurCDEF family.

It localises to the cytoplasm. The catalysed reaction is UDP-N-acetyl-alpha-D-muramate + L-alanine + ATP = UDP-N-acetyl-alpha-D-muramoyl-L-alanine + ADP + phosphate + H(+). The protein operates within cell wall biogenesis; peptidoglycan biosynthesis. Functionally, cell wall formation. In Fusobacterium nucleatum subsp. nucleatum (strain ATCC 25586 / DSM 15643 / BCRC 10681 / CIP 101130 / JCM 8532 / KCTC 2640 / LMG 13131 / VPI 4355), this protein is UDP-N-acetylmuramate--L-alanine ligase.